The primary structure comprises 786 residues: Wall-associated receptor kinase-like 17 (786 aa).

An N-terminal signal peptide occupies residues Met1 to Ser30. Residues Ser31–Ala369 are Extracellular-facing. 5 N-linked (GlcNAc...) asparagine glycosylation sites follow: Asn69, Asn122, Asn160, Asn165, and Asn274. Residues Cys301 to Cys362 form an atypical EGF-like region. 3 disulfides stabilise this stretch: Cys303/Cys318, Cys340/Cys353, and Cys347/Cys362. The helical transmembrane segment at Ile370–Leu390 threads the bilayer. Residues Arg391 to Trp786 lie on the Cytoplasmic side of the membrane. Thr433 is modified (phosphothreonine). The region spanning Phe444–Ile719 is the Protein kinase domain. Residues Leu450–Val458 and Lys472 each bind ATP. A Phosphotyrosine modification is found at Tyr517. The active-site Proton acceptor is the Asp570. A phosphothreonine mark is found at Thr604 and Thr609. Tyr617 bears the Phosphotyrosine mark. Residues Ser766–Ser775 show a composition bias toward low complexity. The disordered stretch occupies residues Ser766–Trp786.

This sequence belongs to the protein kinase superfamily. Ser/Thr protein kinase family.

The protein resides in the membrane. It catalyses the reaction L-seryl-[protein] + ATP = O-phospho-L-seryl-[protein] + ADP + H(+). The enzyme catalyses L-threonyl-[protein] + ATP = O-phospho-L-threonyl-[protein] + ADP + H(+). In terms of biological role, serine/threonine-protein kinase that may function as a signaling receptor of extracellular matrix component. This is Wall-associated receptor kinase-like 17 (WAKL17) from Arabidopsis thaliana (Mouse-ear cress).